A 262-amino-acid chain; its full sequence is Tryptophan synthase alpha chain (262 aa).

Catalysis depends on proton acceptor residues Glu48 and Asp59.

Belongs to the TrpA family. Tetramer of two alpha and two beta chains.

The catalysed reaction is (1S,2R)-1-C-(indol-3-yl)glycerol 3-phosphate + L-serine = D-glyceraldehyde 3-phosphate + L-tryptophan + H2O. Its pathway is amino-acid biosynthesis; L-tryptophan biosynthesis; L-tryptophan from chorismate: step 5/5. The alpha subunit is responsible for the aldol cleavage of indoleglycerol phosphate to indole and glyceraldehyde 3-phosphate. In Helicobacter pylori (strain J99 / ATCC 700824) (Campylobacter pylori J99), this protein is Tryptophan synthase alpha chain.